The chain runs to 330 residues: Putative 1-aminocyclopropane-1-carboxylate deaminase (330 aa).

An N6-(pyridoxal phosphate)lysine modification is found at Lys-54.

Belongs to the ACC deaminase/D-cysteine desulfhydrase family. The cofactor is pyridoxal 5'-phosphate.

It carries out the reaction 1-aminocyclopropane-1-carboxylate + H2O = 2-oxobutanoate + NH4(+). The polypeptide is Putative 1-aminocyclopropane-1-carboxylate deaminase (Pyrococcus abyssi (strain GE5 / Orsay)).